The chain runs to 427 residues: Adenylosuccinate synthetase (427 aa).

GTP-binding positions include 12-18 (GDEGKGK) and 40-42 (GHT). Asp-13 serves as the catalytic Proton acceptor. 2 residues coordinate Mg(2+): Asp-13 and Gly-40. IMP-binding positions include 13 to 16 (DEGK), 38 to 41 (NAGH), Thr-128, Arg-142, Gln-223, Thr-238, and Arg-302. His-41 (proton donor) is an active-site residue. 298–304 (TTTGRPR) is a substrate binding site. GTP contacts are provided by residues Arg-304, 330–332 (SID), and 412–414 (SVG).

This sequence belongs to the adenylosuccinate synthetase family. As to quaternary structure, homodimer. Mg(2+) serves as cofactor.

The protein resides in the cytoplasm. The enzyme catalyses IMP + L-aspartate + GTP = N(6)-(1,2-dicarboxyethyl)-AMP + GDP + phosphate + 2 H(+). Its pathway is purine metabolism; AMP biosynthesis via de novo pathway; AMP from IMP: step 1/2. Plays an important role in the de novo pathway of purine nucleotide biosynthesis. Catalyzes the first committed step in the biosynthesis of AMP from IMP. The chain is Adenylosuccinate synthetase from Staphylococcus aureus (strain MW2).